A 120-amino-acid chain; its full sequence is Large ribosomal subunit protein uL18 (120 aa).

This sequence belongs to the universal ribosomal protein uL18 family. As to quaternary structure, part of the 50S ribosomal subunit; part of the 5S rRNA/L5/L18/L25 subcomplex. Contacts the 5S and 23S rRNAs.

Its function is as follows. This is one of the proteins that bind and probably mediate the attachment of the 5S RNA into the large ribosomal subunit, where it forms part of the central protuberance. The sequence is that of Large ribosomal subunit protein uL18 from Bartonella quintana (strain Toulouse) (Rochalimaea quintana).